Reading from the N-terminus, the 237-residue chain is Phosphoribosylaminoimidazole-succinocarboxamide synthase (237 aa).

Belongs to the SAICAR synthetase family.

The catalysed reaction is 5-amino-1-(5-phospho-D-ribosyl)imidazole-4-carboxylate + L-aspartate + ATP = (2S)-2-[5-amino-1-(5-phospho-beta-D-ribosyl)imidazole-4-carboxamido]succinate + ADP + phosphate + 2 H(+). Its pathway is purine metabolism; IMP biosynthesis via de novo pathway; 5-amino-1-(5-phospho-D-ribosyl)imidazole-4-carboxamide from 5-amino-1-(5-phospho-D-ribosyl)imidazole-4-carboxylate: step 1/2. The sequence is that of Phosphoribosylaminoimidazole-succinocarboxamide synthase from Proteus mirabilis (strain HI4320).